The sequence spans 448 residues: Trigger factor (448 aa).

The region spanning glycine 163–alanine 248 is the PPIase FKBP-type domain.

This sequence belongs to the FKBP-type PPIase family. Tig subfamily.

The protein localises to the cytoplasm. The enzyme catalyses [protein]-peptidylproline (omega=180) = [protein]-peptidylproline (omega=0). Involved in protein export. Acts as a chaperone by maintaining the newly synthesized protein in an open conformation. Functions as a peptidyl-prolyl cis-trans isomerase. The chain is Trigger factor from Rhodospirillum centenum (strain ATCC 51521 / SW).